A 283-amino-acid polypeptide reads, in one-letter code: Thymidylate synthase (283 aa).

R22 contributes to the dUMP binding site. C160 serves as the catalytic Nucleophile. Residues 180–183, N191, and 221–223 contribute to the dUMP site; these read RSCD and HIY. D183 is a binding site for (6R)-5,10-methylene-5,6,7,8-tetrahydrofolate. S282 is a (6R)-5,10-methylene-5,6,7,8-tetrahydrofolate binding site.

Belongs to the thymidylate synthase family. Bacterial-type ThyA subfamily. Homodimer.

Its subcellular location is the cytoplasm. It catalyses the reaction dUMP + (6R)-5,10-methylene-5,6,7,8-tetrahydrofolate = 7,8-dihydrofolate + dTMP. The protein operates within pyrimidine metabolism; dTTP biosynthesis. Its function is as follows. Catalyzes the reductive methylation of 2'-deoxyuridine-5'-monophosphate (dUMP) to 2'-deoxythymidine-5'-monophosphate (dTMP) while utilizing 5,10-methylenetetrahydrofolate (mTHF) as the methyl donor and reductant in the reaction, yielding dihydrofolate (DHF) as a by-product. This enzymatic reaction provides an intracellular de novo source of dTMP, an essential precursor for DNA biosynthesis. The protein is Thymidylate synthase of Shewanella halifaxensis (strain HAW-EB4).